A 254-amino-acid polypeptide reads, in one-letter code: MVRVVIESELVRTEKELPNSLKLRQFKDRLYHVTGVEPEDMEIVVKRQYDNKEIYSTKKGGAYSNEDEDANFLKGEEELIVVVTDSNAQSISNQLATQAEGIPSMEVISEEDYLRRDQSVLRWKMAHGYGRFNAAQQSQRAALAKQDEAYAREQLTAAIGRHCRVTVDGSAPREAILRYVGPLPLDVMGTWCGVEFPEAAGKNDGRINGVTLFGPVAPGHGSFVRPRAVEILSKDEESAEVEDVHDDVESDDEI.

The CAP-Gly domain occupies 182-225 (PLPLDVMGTWCGVEFPEAAGKNDGRINGVTLFGPVAPGHGSFVR). The disordered stretch occupies residues 234 to 254 (KDEESAEVEDVHDDVESDDEI). Residues 237–254 (ESAEVEDVHDDVESDDEI) are compositionally biased toward acidic residues.

Belongs to the TBCB family. Binds to monomeric alpha-tubulin.

Its subcellular location is the cytoplasm. It localises to the cytoskeleton. In terms of biological role, acts to sequester alpha-tubulin from interaction with beta-tubulin, raising the possibility that it plays a regulatory role in the formation of the tubulin heterodimer. The protein is Tubulin-specific chaperone B (ALF1) of Saccharomyces cerevisiae (strain ATCC 204508 / S288c) (Baker's yeast).